We begin with the raw amino-acid sequence, 296 residues long: Putative S-adenosyl-L-methionine-dependent methyltransferase MAV_4764 (296 aa).

Residues aspartate 121 and 150–151 (DL) contribute to the S-adenosyl-L-methionine site.

The protein belongs to the UPF0677 family.

In terms of biological role, exhibits S-adenosyl-L-methionine-dependent methyltransferase activity. The protein is Putative S-adenosyl-L-methionine-dependent methyltransferase MAV_4764 of Mycobacterium avium (strain 104).